A 659-amino-acid chain; its full sequence is Cytochrome bo(3) ubiquinol oxidase subunit 1 (659 aa).

At 1-14 the chain is on the extracellular side; sequence MFGKLTLKAIPVDE. The helical transmembrane segment at 15–35 threads the bilayer; the sequence is PIIMVTYISIILIALFISFSI. Over 36-58 the chain is Cytoplasmic; sequence TYFKKWKYLWYEWFTTVDHKKIS. The helical transmembrane segment at 59-79 threads the bilayer; the sequence is IMYGILAFIMLFRGFVDAILM. Residues Arg71, Asp75, and His98 each coordinate a ubiquinone. Residues 80–106 lie on the Extracellular side of the membrane; it reads RTQQVIASSGNTGFLPPHHYDQIFTAH. His106 provides a ligand contact to heme b. Residues 107 to 127 form a helical membrane-spanning segment; sequence GVIMIFFVAMPLVIGLMNLVV. Over 128-145 the chain is Cytoplasmic; that stretch reads PLQIGARDVAFPFLNNLS. A helical transmembrane segment spans residues 146–166; the sequence is FWLNVSGAILLTLSLGIGEFA. The Extracellular portion of the chain corresponds to 167 to 189; sequence QTGWLAYPPLSEVKYSPGVGVDY. Residue Trp170 coordinates heme b. Residues 190-210 traverse the membrane as a helical segment; the sequence is WIWSLQISGVGTTLTGINFLI. Residues 211–225 are Cytoplasmic-facing; it reads TILKMRAPGMCFFKM. The helical transmembrane segment at 226 to 246 threads the bilayer; the sequence is PVFTWAALCTNILIVISFPVL. Over 247 to 277 the chain is Extracellular; it reads TTTLLLLTLDRCFDFHFFTNNFGGNPMMYVN. A helical transmembrane segment spans residues 278-298; it reads LIWIWGHPEVYILVLPVFGVF. Residue His284 participates in Cu(2+) binding. The 1'-histidyl-3'-tyrosine (His-Tyr) cross-link spans 284 to 288; the sequence is HPEVY. Position 288 (Tyr288) interacts with Fe(II)-heme o. The Cytoplasmic segment spans residues 299–309; it reads SEVVATFSKKR. Residues 310–330 traverse the membrane as a helical segment; the sequence is LFGYVSLVWATLAITILSFIV. Residues 331–347 lie on the Extracellular side of the membrane; that stretch reads WLHHFFTMGAGSNVNAF. His333 and His334 together coordinate Cu(2+). The chain crosses the membrane as a helical span at residues 348 to 368; sequence FGITTMIIAIPTGVKIFNWLF. The Cytoplasmic portion of the chain corresponds to 369 to 380; that stretch reads TMYQGRVHMHSS. Residues 381 to 401 form a helical membrane-spanning segment; sequence MLWTIGFLITFSIGGMTGVLL. Residues 402-413 lie on the Extracellular side of the membrane; sequence SIPPADFILHNS. Residues His411 and His419 each contribute to the Fe(II)-heme o site. Residues 414–434 traverse the membrane as a helical segment; it reads LFLVAHFHNVIIGGVVFGCFA. A heme b-binding site is contributed by His421. Over 435–456 the chain is Cytoplasmic; it reads GINYWFPKLFGFILNELWGKRA. Residues 457–477 traverse the membrane as a helical segment; that stretch reads FWFWIIGFFTAFMPLYFLGFM. Topologically, residues 478 to 490 are extracellular; that stretch reads GMTRRLSQNIDIE. The heme b site is built by Arg481 and Arg482. A helical membrane pass occupies residues 491–511; the sequence is FHFLLSIAAIGAILIGIGILC. The Cytoplasmic portion of the chain corresponds to 512–580; sequence QIIQFWVSVR…KNQVQKKQYS (69 aa). Residues 581 to 601 form a helical membrane-spanning segment; the sequence is AIHMPKNTGLGIFISFFSLLF. Residues 602–605 lie on the Extracellular side of the membrane; sequence GFSA. The helical transmembrane segment at 606–626 threads the bilayer; the sequence is VWNIIWLSFLSFLVVIISLIF. Residues 627–659 lie on the Cytoplasmic side of the membrane; the sequence is KSIDENTEYTVSVKEIESIENRHLENVQKAGLK.

It belongs to the heme-copper respiratory oxidase family. In terms of assembly, the cytochrome bo(3) ubiquinol oxidase complex is a heterooctamer of two A chains, two B chains, two C chains and two D chains. Cu(2+) is required as a cofactor. The cofactor is heme b. Fe(II)-heme o serves as cofactor.

The protein resides in the cell membrane. The enzyme catalyses 2 a ubiquinol + O2 + n H(+)(in) = 2 a ubiquinone + 2 H2O + n H(+)(out). In terms of biological role, cytochrome bo(3) ubiquinol oxidase is the terminal enzyme in the aerobic respiratory chain. Catalyzes the four-electron reduction of O2 to water, using a ubiquinol as a membrane soluble electron donor for molecular oxygen reduction. Has proton pump activity across the membrane in addition to electron transfer, pumping 2 protons/electron and generating a proton motive force. All the redox centers of this enzyme complex are located within the largest subunit, subunit I. Protons are probably pumped via D- and K- channels found in this subunit. This is Cytochrome bo(3) ubiquinol oxidase subunit 1 (cyoB) from Buchnera aphidicola subsp. Schizaphis graminum (strain Sg).